A 546-amino-acid polypeptide reads, in one-letter code: MRIEEWCRSRLGEFLLFVLAVSLFALSHPNPLLPRGCALLAYGALAPLFLLVRWASGFAVVFWGGAYGAFSYGAFSYWLFVFHPVALCVVAGFSALFLAALCLALKAGGAFWQRRALLVQCLVWLGYEYAKTLGFLGFPYGVMGYSQWRVLPLIQVASVFGVWVVSALVVFPSAWLASVLGQWVEESERNARAFLSAAYSHWVSALVWVGLCGFCVCAAKAGWWPDCTAHTRAKVALVQPNGDPRRGGIESYRADFSTLTYLSDWALERYPDVDLVVWPETAFVPRIDWHYRYRHEQQSFQLVCDLLDYVNAKNCPFIIGSDDAYKKRTKEGNWERVDYNAALLFIPGVNVLPPSPQRYHKIKLVPFTEYFPYKRVFPWFYNFLEKQDARFWAQGSEFVVFEARGLKFSVPICFEDAFGYITREFCARGASLLVNISNDSWAKSLSCQYQHLSMAVFRAIENRRALVRASTSGQTVAIAPDGRILDELQPFAPGVLVADVPIVTCACGGYRYWGDALGVFFCVASLFILIAGGVRHMLRCRRGGWR.

The next 7 helical transmembrane spans lie at 14 to 34, 41 to 61, 62 to 82, 85 to 105, 122 to 142, 151 to 171, and 194 to 214; these read FLLF…PLLP, AYGA…FAVV, FWGG…LFVF, VALC…CLAL, LVWL…PYGV, LPLI…LVVF, and FLSA…LCGF. Positions 233-502 constitute a CN hydrolase domain; the sequence is AKVALVQPNG…PGVLVADVPI (270 aa). Residue Glu-280 is the Proton acceptor of the active site. Lys-361 is an active-site residue. The active-site Nucleophile is the Cys-413. A helical transmembrane segment spans residues 514–534; the sequence is GDALGVFFCVASLFILIAGGV.

This sequence belongs to the CN hydrolase family. Apolipoprotein N-acyltransferase subfamily.

The protein localises to the cell inner membrane. The catalysed reaction is N-terminal S-1,2-diacyl-sn-glyceryl-L-cysteinyl-[lipoprotein] + a glycerophospholipid = N-acyl-S-1,2-diacyl-sn-glyceryl-L-cysteinyl-[lipoprotein] + a 2-acyl-sn-glycero-3-phospholipid + H(+). The protein operates within protein modification; lipoprotein biosynthesis (N-acyl transfer). Functionally, catalyzes the phospholipid dependent N-acylation of the N-terminal cysteine of apolipoprotein, the last step in lipoprotein maturation. The chain is Apolipoprotein N-acyltransferase 1 from Treponema pallidum (strain Nichols).